Consider the following 101-residue polypeptide: uncharacterized protein (101 aa).

The next 2 membrane-spanning stretches (helical) occupy residues 35 to 55 (LWTM…LIII) and 66 to 86 (FLFF…TLLF).

It is found in the membrane. This is an uncharacterized protein from Saccharomyces cerevisiae (strain ATCC 204508 / S288c) (Baker's yeast).